The following is a 301-amino-acid chain: ADP-ribosyl cyclase/cyclic ADP-ribose hydrolase 1 (301 aa).

Residues Met1–Arg21 are Cytoplasmic-facing. Residues Ala22–Val43 traverse the membrane as a helical; Signal-anchor for type II membrane protein segment. Topologically, residues Leu44–Ile301 are extracellular. Intrachain disulfides connect Cys68–Cys83, Cys100–Cys181, and Cys161–Cys174. Residue Asn101 is glycosylated (N-linked (GlcNAc...) asparagine). Cys120 is a catalytic residue. The N-linked (GlcNAc...) asparagine glycan is linked to Asn121. Residue Cys202 is part of the active site. N-linked (GlcNAc...) asparagine glycans are attached at residues Asn210 and Asn220. Disulfide bonds link Cys255-Cys276 and Cys288-Cys297.

This sequence belongs to the ADP-ribosyl cyclase family. Homodimer.

Its subcellular location is the cell surface. It is found in the membrane. The enzyme catalyses NAD(+) = cyclic ADP-beta-D-ribose + nicotinamide + H(+). It catalyses the reaction 2'-phospho-cyclic ADP-ribose + nicotinate = nicotinate-adenine dinucleotide phosphate. The catalysed reaction is NAD(+) + H2O = ADP-D-ribose + nicotinamide + H(+). It carries out the reaction nicotinate + NADP(+) = nicotinate-adenine dinucleotide phosphate + nicotinamide. Its activity is regulated as follows. ATP inhibits the cADPR hydrolyzing activity. Synthesizes cyclic ADP-ribose (cADPR), a second messenger for glucose-induced insulin secretion. Synthesizes the Ca(2+) mobilizer nicotinate-adenine dinucleotide phosphate, NAADP(+), from 2'-phospho-cADPR and nicotinic acid, as well as from NADP(+) and nicotinic acid. Also has cADPR hydrolase activity. The sequence is that of ADP-ribosyl cyclase/cyclic ADP-ribose hydrolase 1 (CD38) from Macaca fascicularis (Crab-eating macaque).